A 236-amino-acid chain; its full sequence is 1-(5-phosphoribosyl)-5-[(5-phosphoribosylamino)methylideneamino] imidazole-4-carboxamide isomerase (236 aa).

The Proton acceptor role is filled by Asp-8. Catalysis depends on Asp-127, which acts as the Proton donor.

It belongs to the HisA/HisF family.

It localises to the cytoplasm. It carries out the reaction 1-(5-phospho-beta-D-ribosyl)-5-[(5-phospho-beta-D-ribosylamino)methylideneamino]imidazole-4-carboxamide = 5-[(5-phospho-1-deoxy-D-ribulos-1-ylimino)methylamino]-1-(5-phospho-beta-D-ribosyl)imidazole-4-carboxamide. It functions in the pathway amino-acid biosynthesis; L-histidine biosynthesis; L-histidine from 5-phospho-alpha-D-ribose 1-diphosphate: step 4/9. The protein is 1-(5-phosphoribosyl)-5-[(5-phosphoribosylamino)methylideneamino] imidazole-4-carboxamide isomerase of Campylobacter concisus (strain 13826).